We begin with the raw amino-acid sequence, 466 residues long: Transcription factor SOX-10 (466 aa).

5 disordered regions span residues 1 to 67 (MAEE…DDDK), 160 to 200 (LRMQ…QGGA), 213 to 275 (DHRH…DFGN), 344 to 375 (TVSP…QPST), and 433 to 466 (RPLY…LSRP). Over residues 23–32 (LSPGSAPSLG) the composition is skewed to low complexity. Serine 24 carries the post-translational modification Phosphoserine. The interval 62–102 (EADDDKFPVCIREAVSQVLSGYDWTLVPMPVRVNGASKSKP) is dimerization (DIM). Residues 104 to 172 (VKRPMNAFMV…QHKKDHPDYK (69 aa)) constitute a DNA-binding region (HMG box). Residues 160 to 173 (LRMQHKKDHPDYKY) show a composition bias toward basic and acidic residues. Positions 183 to 200 (AAQGEAECPGGEAEQGGA) are enriched in low complexity. The segment at 228 to 310 (PEHPSGQSHG…LPPNGHPGHV (83 aa)) is transactivation domain (TAM). Over residues 254–271 (ADPKRDGRSLGEGGKPHI) the composition is skewed to basic and acidic residues. Residues 353–466 (KAQVKTETTG…QPVYTTLSRP (114 aa)) are transactivation domain (TAC). The segment covering 440 to 466 (SDPSPSGPQSHSPTHWEQPVYTTLSRP) has biased composition (polar residues).

In terms of assembly, monomer. Interacts with Armcx3 at the mitochondrial outer membrane surface. Interacts with PAX3. In terms of tissue distribution, expressed in oligodendroglia of the spinal tube (at protein level).

It localises to the cytoplasm. It is found in the nucleus. Its subcellular location is the mitochondrion outer membrane. Transcription factor that plays a central role in developing and mature glia. Specifically activates expression of myelin genes, during oligodendrocyte (OL) maturation, such as DUSP15 and MYRF, thereby playing a central role in oligodendrocyte maturation and CNS myelination. Once induced, MYRF cooperates with SOX10 to implement the myelination program. Transcriptional activator of MITF, acting synergistically with PAX3. Transcriptional activator of MBP, via binding to the gene promoter. This chain is Transcription factor SOX-10 (Sox10), found in Mus musculus (Mouse).